Reading from the N-terminus, the 1958-residue chain is Echinoderm microtubule-associated protein-like 6 (1958 aa).

WD repeat units follow at residues 59 to 100 (GHND…TVSL), 104 to 145 (VHTH…LLAS), 148 to 187 (GHSD…LTAK), 195 to 233 (GDLQ…RTIQ), 235 to 273 (AHSA…TKID), 280 to 321 (GYKG…LILQ), 323 to 362 (HCEG…LIAR), 364 to 403 (NMEE…EVVH), 406 to 445 (DRKE…KKIG), and 561 to 601 (GHSA…VSNG). The disordered stretch occupies residues 603–626 (LETAPQEGGADSYSEESDSDLSDV). The segment covering 615–626 (YSEESDSDLSDV) has biased composition (acidic residues). 10 WD repeats span residues 725–766 (GHDD…CLSL), 770–811 (QHQR…KIAT), 814–853 (GHKD…FTSK), 861–900 (GKLE…KTVK), 901–940 (AHDG…KTYA), 996–1035 (HMEG…RMLA), 1038–1077 (KLKK…DMVS), 1080–1120 (HRKE…RVGI), 1191–1230 (SDIT…QHAR), and 1236–1276 (GHSA…TQES). Positions 1322-1337 (KPHQQLKEVSVEERPP) are enriched in basic and acidic residues. The tract at residues 1322 to 1353 (KPHQQLKEVSVEERPPVSRAAPQPEKLQKNNI) is disordered. WD repeat units lie at residues 1412 to 1456 (EHTD…TLSM), 1460 to 1501 (FHSK…KVAS), 1504 to 1543 (GHLE…LLYK), 1553 to 1591 (AKMQ…RLVA), 1593 to 1638 (AHTG…CRAF), 1685 to 1724 (HMEG…LLNK), 1726 to 1767 (SLGH…GKKR), 1768 to 1807 (DRKS…NLNR), 1880 to 1919 (ADKA…KFAK), and 1925 to 1958 (GHSA…WRCL).

This sequence belongs to the WD repeat EMAP family.

The protein localises to the cytoplasm. It localises to the cytoskeleton. In terms of biological role, may modify the assembly dynamics of microtubules, such that microtubules are slightly longer, but more dynamic. The chain is Echinoderm microtubule-associated protein-like 6 (EML6) from Homo sapiens (Human).